The chain runs to 413 residues: Probable N-acetyltransferase HLS1-like (413 aa).

Positions 5–187 (VEVREYDPSK…VNPVYAHRVN (183 aa)) constitute an N-acetyltransferase domain.

This sequence belongs to the acetyltransferase family.

The chain is Probable N-acetyltransferase HLS1-like from Arabidopsis thaliana (Mouse-ear cress).